The following is a 333-amino-acid chain: Methionine import ATP-binding protein MetN 1 (333 aa).

Positions 2 to 241 (ITFEGVEKVY…PETETAKSFV (240 aa)) constitute an ABC transporter domain. 38–45 (GFSGAGKS) contacts ATP.

Belongs to the ABC transporter superfamily. Methionine importer (TC 3.A.1.24) family. In terms of assembly, the complex is composed of two ATP-binding proteins (MetN), two transmembrane proteins (MetI) and a solute-binding protein (MetQ).

Its subcellular location is the cell membrane. It carries out the reaction L-methionine(out) + ATP + H2O = L-methionine(in) + ADP + phosphate + H(+). The catalysed reaction is D-methionine(out) + ATP + H2O = D-methionine(in) + ADP + phosphate + H(+). Functionally, part of the ABC transporter complex MetNIQ involved in methionine import. Responsible for energy coupling to the transport system. The sequence is that of Methionine import ATP-binding protein MetN 1 from Bacillus licheniformis (strain ATCC 14580 / DSM 13 / JCM 2505 / CCUG 7422 / NBRC 12200 / NCIMB 9375 / NCTC 10341 / NRRL NRS-1264 / Gibson 46).